A 273-amino-acid polypeptide reads, in one-letter code: Tryptophan synthase alpha chain (273 aa).

Active-site proton acceptor residues include Glu-56 and Asp-67.

Belongs to the TrpA family. Tetramer of two alpha and two beta chains.

The catalysed reaction is (1S,2R)-1-C-(indol-3-yl)glycerol 3-phosphate + L-serine = D-glyceraldehyde 3-phosphate + L-tryptophan + H2O. It functions in the pathway amino-acid biosynthesis; L-tryptophan biosynthesis; L-tryptophan from chorismate: step 5/5. Functionally, the alpha subunit is responsible for the aldol cleavage of indoleglycerol phosphate to indole and glyceraldehyde 3-phosphate. This chain is Tryptophan synthase alpha chain, found in Shewanella baltica (strain OS185).